Reading from the N-terminus, the 599-residue chain is MSDLSHIRNFSIIAHIDHGKSTLADRFIQMCGGLSAREMEAQVLDSMDLERERGITIKAHSVTLHYKAQDGKTYQLNFIDTPGHVDFTYEVSRSLAACEGALLVVDAGQGVEAQSVANCYTAIEQGLEVMPVLNKMDLPQADPDRVKDEIEKIIGIDATDAVACSAKSGMGVDEVLERLVHTIPAPEGEIDAPLQALIIDSWFDNYLGVVSLVRVRQGRVKKGDKILVKSTGKVHLVDSVGVFTPKHTQTADLKAGEVGFIIASIKDIHGAPVGDTLTLSSTPEVEVLPGFKKIQPQVYAGLFPVSSDDFEDFRDALQKLTLNDSSLQYMPESSDALGFGFRCGFLGMLHMEIIQERLEREYDLDLITTAPSVIYELELKTGETIVVDNPSKLPDVSAVADFREPIVTATILVPQEHLGNVITLCIEKRGVQRDMQFLGSQVQVRYDMPMNEVVLDFFDRLKSTSRGYASLDYHFDRYQSANLVKLDVLINGDKVDALALIVHRDNAAYKGRALTEKMKELIPRQMFDVAIQAAIGGQIIARTTVKALRKNVLAKCYGGDVSRKKKLLEKQKAGKKRMKQVGNVEIPQEAFLAVLRLDS.

Residues 5–187 enclose the tr-type G domain; that stretch reads SHIRNFSIIA…RLVHTIPAPE (183 aa). Residues 17 to 22 and 134 to 137 contribute to the GTP site; these read DHGKST and NKMD.

The protein belongs to the TRAFAC class translation factor GTPase superfamily. Classic translation factor GTPase family. LepA subfamily.

It localises to the cell inner membrane. It carries out the reaction GTP + H2O = GDP + phosphate + H(+). Its function is as follows. Required for accurate and efficient protein synthesis under certain stress conditions. May act as a fidelity factor of the translation reaction, by catalyzing a one-codon backward translocation of tRNAs on improperly translocated ribosomes. Back-translocation proceeds from a post-translocation (POST) complex to a pre-translocation (PRE) complex, thus giving elongation factor G a second chance to translocate the tRNAs correctly. Binds to ribosomes in a GTP-dependent manner. The chain is Elongation factor 4 from Pseudomonas putida (strain ATCC 47054 / DSM 6125 / CFBP 8728 / NCIMB 11950 / KT2440).